The primary structure comprises 218 residues: Adenylate kinase (218 aa).

Residue 10–15 coordinates ATP; sequence GAGKGT. Residues 30–59 form an NMP region; that stretch reads STGDMLRAAVKEGSELGLKVKEIMNSGGLV. AMP is bound by residues T31, R36, 57–59, 85–88, and Q92; these read GLV and GFPR. The LID stretch occupies residues 122–159; the sequence is GRRVHPGSGRVYHVDYNPPKEEGKDDVTGEALIQRDDD. Residues R123 and 132 to 133 each bind ATP; that span reads VY. AMP contacts are provided by R156 and R167. G203 is an ATP binding site.

This sequence belongs to the adenylate kinase family. As to quaternary structure, monomer.

The protein resides in the cytoplasm. The enzyme catalyses AMP + ATP = 2 ADP. It functions in the pathway purine metabolism; AMP biosynthesis via salvage pathway; AMP from ADP: step 1/1. Functionally, catalyzes the reversible transfer of the terminal phosphate group between ATP and AMP. Plays an important role in cellular energy homeostasis and in adenine nucleotide metabolism. This Chromohalobacter salexigens (strain ATCC BAA-138 / DSM 3043 / CIP 106854 / NCIMB 13768 / 1H11) protein is Adenylate kinase.